The chain runs to 335 residues: UPF0324 membrane protein gbs1193 (335 aa).

Transmembrane regions (helical) follow at residues 20–42 (SWLLGLYLPLIGAPVFAILIGII), 57–79 (IAFTSKYILQTAVVLLGFGLNLM), 84–106 (VGISSLPIIIMTISISLIIAYVL), 116–138 (IATLIGVGSSICGGSAIAATAPV), 151–173 (SVIFLFNILAALIFPTLGNFIGL), 210–232 (GATIVKLTRTLAIIPITIVLSIY), 253–275 (VLYFILASLLTTIVASLGFSLRI), 285–304 (FFIVMAMGAIGINTNVSKLI), and 311–333 (ILLGAACWLGIIIVSLTMQAILG).

It belongs to the UPF0324 family.

Its subcellular location is the cell membrane. In Streptococcus agalactiae serotype III (strain NEM316), this protein is UPF0324 membrane protein gbs1193.